Here is a 363-residue protein sequence, read N- to C-terminus: U-box domain-containing protein 62 (363 aa).

Residues 74–117 are disordered; sequence KPIIGNPNDSGGSDGEDDVDVEEEDEDDDLDGNEGDIGMNKDAG. A compositionally biased stretch (acidic residues) spans 87 to 107; the sequence is DGEDDVDVEEEDEDDDLDGNE. Positions 181-253 constitute a U-box domain; sequence SLRTILSDPT…QAFCREENSQ (73 aa). The disordered stretch occupies residues 343 to 363; sequence AKAPEDPSAKATPNKMVSNWL.

The catalysed reaction is S-ubiquitinyl-[E2 ubiquitin-conjugating enzyme]-L-cysteine + [acceptor protein]-L-lysine = [E2 ubiquitin-conjugating enzyme]-L-cysteine + N(6)-ubiquitinyl-[acceptor protein]-L-lysine.. Its pathway is protein modification; protein ubiquitination. Its function is as follows. Functions as an E3 ubiquitin ligase. This is U-box domain-containing protein 62 (PUB62) from Arabidopsis thaliana (Mouse-ear cress).